The primary structure comprises 105 residues: Urease subunit beta (105 aa).

Belongs to the urease beta subunit family. Heterotrimer of UreA (gamma), UreB (beta) and UreC (alpha) subunits. Three heterotrimers associate to form the active enzyme.

The protein resides in the cytoplasm. The catalysed reaction is urea + 2 H2O + H(+) = hydrogencarbonate + 2 NH4(+). Its pathway is nitrogen metabolism; urea degradation; CO(2) and NH(3) from urea (urease route): step 1/1. In Pseudomonas entomophila (strain L48), this protein is Urease subunit beta.